The following is a 232-amino-acid chain: Ornithine carbamoyltransferase (232 aa).

Residues Gln15, Arg39, and 66–69 (HPTQ) contribute to the carbamoyl phosphate site. L-ornithine contacts are provided by residues Asn99, Asp163, and 167–168 (SM). Carbamoyl phosphate contacts are provided by residues 204 to 207 (HCLP) and Thr232.

This sequence belongs to the aspartate/ornithine carbamoyltransferase superfamily. OTCase family.

The protein resides in the cytoplasm. The catalysed reaction is carbamoyl phosphate + L-ornithine = L-citrulline + phosphate + H(+). It functions in the pathway amino-acid biosynthesis; L-arginine biosynthesis; L-arginine from L-ornithine and carbamoyl phosphate: step 1/3. In terms of biological role, reversibly catalyzes the transfer of the carbamoyl group from carbamoyl phosphate (CP) to the N(epsilon) atom of ornithine (ORN) to produce L-citrulline. The protein is Ornithine carbamoyltransferase (argF) of Neisseria sicca.